The chain runs to 424 residues: Tyrosine--tRNA ligase (424 aa).

Position 37 (tyrosine 37) interacts with L-tyrosine. The 'HIGH' region motif lies at 42-51; it reads PTADSLHLGH. The residue at position 144 (lysine 144) is an N6-acetyllysine. L-tyrosine-binding residues include tyrosine 175 and glutamine 179. The 'KMSKS' region motif lies at 235 to 239; the sequence is KFGKT. Residue lysine 238 participates in ATP binding. Positions 357 to 414 constitute an S4 RNA-binding domain; sequence ADLMQALVDSELQPSRGQARKTIASNAITINGEKQSDPEYFFKEEDRLFGRFTLLRRG.

The protein belongs to the class-I aminoacyl-tRNA synthetase family. TyrS type 1 subfamily. As to quaternary structure, homodimer.

Its subcellular location is the cytoplasm. The enzyme catalyses tRNA(Tyr) + L-tyrosine + ATP = L-tyrosyl-tRNA(Tyr) + AMP + diphosphate + H(+). Its function is as follows. Catalyzes the attachment of tyrosine to tRNA(Tyr) in a two-step reaction: tyrosine is first activated by ATP to form Tyr-AMP and then transferred to the acceptor end of tRNA(Tyr). This chain is Tyrosine--tRNA ligase, found in Shigella dysenteriae serotype 1 (strain Sd197).